A 360-amino-acid chain; its full sequence is Aspartate beta-hydroxylase domain-containing protein 1 (360 aa).

Topologically, residues 1–45 (MWKGGNQEAVIEGSGGELGVPGSWGLQDAACHLARASLPIMFPWP) are cytoplasmic. Residues 46 to 68 (LPLGSSALTMLLGALTSLFLWYC) traverse the membrane as a helical segment. Topologically, residues 69-360 (YRLGSQDMQA…ALDFVFAPDP (292 aa)) are lumenal.

This sequence belongs to the aspartyl/asparaginyl beta-hydroxylase family.

Its subcellular location is the membrane. The polypeptide is Aspartate beta-hydroxylase domain-containing protein 1 (Asphd1) (Mus musculus (Mouse)).